The sequence spans 398 residues: MNIHEYQAKRLLHTYGAPIANGVAVYSVEQAEEWAKTLPGPLYVVKSQIHAGGRGKGKFKELPADAKGGVRLAKSVEEVVANAKEMLGNTLVTKQTGPAGKQVNRLYIEDGADIDRELYLSILIDRTVGRPAFVVSTEGGMDIEAVAEETPEKIVTVAIDPAKGVTDEDASKLADALKLEGQAREDGVKLFPILYKAFTEKDMSLLEINPLIVMTDGRVRVLDAKVSFDGNALFRHPDIQELRDLSEEDEKEIEASKYDLAYVALDGNIGCMVNGAGLAMATMDIIKLYGAEPANFLDVGGGASKEKVTAAFKIITADPAVQGILVNIFGGIMKCDVIAEGVIAAVKEVGLKVPLVVRLEGTNVELGKKIINESGLNVISADDLDDAAQKIVAAVKGN.

An ATP-grasp domain is found at 9-254; that stretch reads KRLLHTYGAP…LSEEDEKEIE (246 aa). ATP is bound by residues Lys-46, 53-55, Glu-109, Ala-112, and Glu-117; that span reads GRG. Asn-209 and Asp-223 together coordinate Mg(2+). Residues Asn-274 and 331-333 contribute to the substrate site; that span reads GIM.

The protein belongs to the succinate/malate CoA ligase beta subunit family. As to quaternary structure, heterotetramer of two alpha and two beta subunits. The cofactor is Mg(2+).

It catalyses the reaction succinate + ATP + CoA = succinyl-CoA + ADP + phosphate. It carries out the reaction GTP + succinate + CoA = succinyl-CoA + GDP + phosphate. Its pathway is carbohydrate metabolism; tricarboxylic acid cycle; succinate from succinyl-CoA (ligase route): step 1/1. In terms of biological role, succinyl-CoA synthetase functions in the citric acid cycle (TCA), coupling the hydrolysis of succinyl-CoA to the synthesis of either ATP or GTP and thus represents the only step of substrate-level phosphorylation in the TCA. The beta subunit provides nucleotide specificity of the enzyme and binds the substrate succinate, while the binding sites for coenzyme A and phosphate are found in the alpha subunit. The sequence is that of Succinate--CoA ligase [ADP-forming] subunit beta from Brucella anthropi (strain ATCC 49188 / DSM 6882 / CCUG 24695 / JCM 21032 / LMG 3331 / NBRC 15819 / NCTC 12168 / Alc 37) (Ochrobactrum anthropi).